Consider the following 444-residue polypeptide: Phosphoglucosamine mutase (444 aa).

The active-site Phosphoserine intermediate is serine 102. Mg(2+) contacts are provided by serine 102, aspartate 241, aspartate 243, and aspartate 245. Serine 102 is subject to Phosphoserine.

Belongs to the phosphohexose mutase family. Requires Mg(2+) as cofactor. In terms of processing, activated by phosphorylation.

It catalyses the reaction alpha-D-glucosamine 1-phosphate = D-glucosamine 6-phosphate. In terms of biological role, catalyzes the conversion of glucosamine-6-phosphate to glucosamine-1-phosphate. In Leptothrix cholodnii (strain ATCC 51168 / LMG 8142 / SP-6) (Leptothrix discophora (strain SP-6)), this protein is Phosphoglucosamine mutase.